Reading from the N-terminus, the 475-residue chain is Ribulose bisphosphate carboxylase large chain (475 aa).

Positions 1 to 2 (MS) are excised as a propeptide. Pro3 is subject to N-acetylproline. Lys14 is modified (N6,N6,N6-trimethyllysine). The substrate site is built by Asn123 and Thr173. The active-site Proton acceptor is the Lys175. Lys177 provides a ligand contact to substrate. Mg(2+)-binding residues include Lys201, Asp203, and Glu204. Lys201 bears the N6-carboxylysine mark. His294 serves as the catalytic Proton acceptor. Residues Arg295, His327, and Ser379 each coordinate substrate.

This sequence belongs to the RuBisCO large chain family. Type I subfamily. As to quaternary structure, heterohexadecamer of 8 large chains and 8 small chains; disulfide-linked. The disulfide link is formed within the large subunit homodimers. Requires Mg(2+) as cofactor. The disulfide bond which can form in the large chain dimeric partners within the hexadecamer appears to be associated with oxidative stress and protein turnover.

It localises to the plastid. The protein localises to the chloroplast. It catalyses the reaction 2 (2R)-3-phosphoglycerate + 2 H(+) = D-ribulose 1,5-bisphosphate + CO2 + H2O. The catalysed reaction is D-ribulose 1,5-bisphosphate + O2 = 2-phosphoglycolate + (2R)-3-phosphoglycerate + 2 H(+). In terms of biological role, ruBisCO catalyzes two reactions: the carboxylation of D-ribulose 1,5-bisphosphate, the primary event in carbon dioxide fixation, as well as the oxidative fragmentation of the pentose substrate in the photorespiration process. Both reactions occur simultaneously and in competition at the same active site. This chain is Ribulose bisphosphate carboxylase large chain, found in Nandina domestica (Heavenly bamboo).